We begin with the raw amino-acid sequence, 107 residues long: uncharacterized protein (107 aa).

Positions 1–18 (MRTLMLIILSILIYLSSA) are cleaved as a signal peptide.

This is an uncharacterized protein from Caenorhabditis elegans.